We begin with the raw amino-acid sequence, 309 residues long: Transcription termination/antitermination protein NusG (309 aa).

Disordered stretches follow at residues 1–24 and 58–91; these read MSDPNLNDDATEPRGLAADTADDE and EGDHIAETDEDIEAGAVETDEDVETDTDEDVEAG. Over residues 65-91 the composition is skewed to acidic residues; the sequence is TDEDIEAGAVETDEDVETDTDEDVEAG.

This sequence belongs to the NusG family.

Functionally, participates in transcription elongation, termination and antitermination. The sequence is that of Transcription termination/antitermination protein NusG from Streptomyces galbus.